The chain runs to 119 residues: Protein Wnt-4 (119 aa).

A lipid anchor (O-palmitoleoyl serine; by PORCN) is attached at serine 1. 2 disulfide bridges follow: cysteine 69-cysteine 100 and cysteine 85-cysteine 95. N-linked (GlcNAc...) asparagine glycosylation is present at asparagine 86.

It belongs to the Wnt family. In terms of processing, palmitoleoylation is required for efficient binding to frizzled receptors. Depalmitoleoylation leads to Wnt signaling pathway inhibition.

The protein localises to the secreted. It is found in the extracellular space. Its subcellular location is the extracellular matrix. Ligand for members of the frizzled family of seven transmembrane receptors. Plays an important role in embryonic development. The polypeptide is Protein Wnt-4 (WNT-4) (Plethodon jordani (Red-cheeked salamander)).